Reading from the N-terminus, the 152-residue chain is Ribosome maturation factor RimP (152 aa).

This sequence belongs to the RimP family.

The protein localises to the cytoplasm. Functionally, required for maturation of 30S ribosomal subunits. This Francisella tularensis subsp. tularensis (strain FSC 198) protein is Ribosome maturation factor RimP.